Here is a 142-residue protein sequence, read N- to C-terminus: Hemoglobin larval subunit alpha (142 aa).

In terms of domain architecture, Globin spans 2-142 (VLSAEEKALV…VSAVLTSKYR (141 aa)). Residue His-59 coordinates O2. His-88 is a binding site for heme b.

This sequence belongs to the globin family. Heterotetramer of two alpha chains and two beta chains. Red blood cells.

Its function is as follows. Involved in oxygen transport from the lung to the various peripheral tissues. This is Hemoglobin larval subunit alpha from Pleurodeles waltl (Iberian ribbed newt).